The chain runs to 213 residues: Orotate phosphoribosyltransferase (213 aa).

5-phospho-alpha-D-ribose 1-diphosphate is bound at residue Lys26. Phe34–Phe35 provides a ligand contact to orotate. 5-phospho-alpha-D-ribose 1-diphosphate is bound by residues Tyr72–Lys73, Arg99, Lys100, Lys103, His105, and Asp124–Ala132. The orotate site is built by Thr128 and Arg156.

The protein belongs to the purine/pyrimidine phosphoribosyltransferase family. PyrE subfamily. In terms of assembly, homodimer. Mg(2+) serves as cofactor.

It carries out the reaction orotidine 5'-phosphate + diphosphate = orotate + 5-phospho-alpha-D-ribose 1-diphosphate. It participates in pyrimidine metabolism; UMP biosynthesis via de novo pathway; UMP from orotate: step 1/2. In terms of biological role, catalyzes the transfer of a ribosyl phosphate group from 5-phosphoribose 1-diphosphate to orotate, leading to the formation of orotidine monophosphate (OMP). The sequence is that of Orotate phosphoribosyltransferase from Pseudomonas putida (strain W619).